We begin with the raw amino-acid sequence, 99 residues long: Integration host factor subunit alpha (99 aa).

Residues 49 to 73 form a disordered region; sequence FGNFDLRDKNQRPGRNPKTGEDIPI.

It belongs to the bacterial histone-like protein family. As to quaternary structure, heterodimer of an alpha and a beta chain.

In terms of biological role, this protein is one of the two subunits of integration host factor, a specific DNA-binding protein that functions in genetic recombination as well as in transcriptional and translational control. The sequence is that of Integration host factor subunit alpha (ihfA) from Serratia marcescens.